We begin with the raw amino-acid sequence, 273 residues long: 3-methyl-2-oxobutanoate hydroxymethyltransferase (273 aa).

Residues aspartate 53 and aspartate 92 each contribute to the Mg(2+) site. 3-methyl-2-oxobutanoate is bound by residues 53–54 (DS), aspartate 92, and lysine 120. Glutamate 122 provides a ligand contact to Mg(2+). Glutamate 189 functions as the Proton acceptor in the catalytic mechanism.

The protein belongs to the PanB family. In terms of assembly, homodecamer; pentamer of dimers. It depends on Mg(2+) as a cofactor.

The protein localises to the cytoplasm. The enzyme catalyses 3-methyl-2-oxobutanoate + (6R)-5,10-methylene-5,6,7,8-tetrahydrofolate + H2O = 2-dehydropantoate + (6S)-5,6,7,8-tetrahydrofolate. The protein operates within cofactor biosynthesis; (R)-pantothenate biosynthesis; (R)-pantoate from 3-methyl-2-oxobutanoate: step 1/2. Its function is as follows. Catalyzes the reversible reaction in which hydroxymethyl group from 5,10-methylenetetrahydrofolate is transferred onto alpha-ketoisovalerate to form ketopantoate. This Cupriavidus pinatubonensis (strain JMP 134 / LMG 1197) (Cupriavidus necator (strain JMP 134)) protein is 3-methyl-2-oxobutanoate hydroxymethyltransferase.